A 667-amino-acid polypeptide reads, in one-letter code: Transketolase 2 (667 aa).

His-25 contacts substrate. Residues His-65 and 113-115 (GPL) contribute to the thiamine diphosphate site. Residue Asp-154 coordinates Mg(2+). Positions 155 and 184 each coordinate thiamine diphosphate. The Mg(2+) site is built by Asn-184 and Ile-186. Residue His-260 participates in substrate binding. His-260 is a binding site for thiamine diphosphate. Position 342 is an N6-acetyllysine (Lys-342). Residues Arg-357 and Ser-384 each coordinate substrate. Glu-410 acts as the Proton donor in catalysis. Thiamine diphosphate is bound at residue Phe-436. Positions 460, 468, and 519 each coordinate substrate.

The protein belongs to the transketolase family. Homodimer. Mg(2+) serves as cofactor. Requires Ca(2+) as cofactor. The cofactor is Mn(2+). It depends on Co(2+) as a cofactor. Thiamine diphosphate is required as a cofactor.

The catalysed reaction is D-sedoheptulose 7-phosphate + D-glyceraldehyde 3-phosphate = aldehydo-D-ribose 5-phosphate + D-xylulose 5-phosphate. Functionally, catalyzes the reversible transfer of a two-carbon ketol group from sedoheptulose-7-phosphate to glyceraldehyde-3-phosphate, producing xylulose-5-phosphate and ribose-5-phosphate. Catalyzes the transfer of a two-carbon ketol group from a ketose donor to an aldose acceptor, via a covalent intermediate with the cofactor thiamine pyrophosphate. The polypeptide is Transketolase 2 (Escherichia coli (strain K12)).